A 180-amino-acid chain; its full sequence is Sec-independent protein translocase protein TatB (180 aa).

Residues 1–21 traverse the membrane as a helical segment; it reads MFDIGWSELLVIGVVALIAIG. Positions 95-180 are disordered; sequence IEGVDKPVES…AERLKDAKAS (86 aa). Low complexity predominate over residues 103–123; that stretch reads ESQPAASAAPETSATVEAPAT. Basic and acidic residues predominate over residues 170-180; that stretch reads EAERLKDAKAS.

Belongs to the TatB family. As to quaternary structure, the Tat system comprises two distinct complexes: a TatABC complex, containing multiple copies of TatA, TatB and TatC subunits, and a separate TatA complex, containing only TatA subunits. Substrates initially bind to the TatABC complex, which probably triggers association of the separate TatA complex to form the active translocon.

Its subcellular location is the cell inner membrane. In terms of biological role, part of the twin-arginine translocation (Tat) system that transports large folded proteins containing a characteristic twin-arginine motif in their signal peptide across membranes. Together with TatC, TatB is part of a receptor directly interacting with Tat signal peptides. TatB may form an oligomeric binding site that transiently accommodates folded Tat precursor proteins before their translocation. In Bradyrhizobium sp. (strain BTAi1 / ATCC BAA-1182), this protein is Sec-independent protein translocase protein TatB.